The following is a 183-amino-acid chain: DELTA-miturgitoxin-Cp1b (183 aa).

The signal sequence occupies residues 1–20 (MKFSLFFSVFFLAVLHACLS). The propeptide occupies 21–47 (ESEIDLEDEEHFMSSDSFLSEIQDESR). Residues 44-47 (DESR) carry the Processing quadruplet motif motif. Intrachain disulfides connect cysteine 51-cysteine 66, cysteine 58-cysteine 75, cysteine 65-cysteine 88, cysteine 77-cysteine 86, cysteine 115-cysteine 130, cysteine 122-cysteine 139, cysteine 129-cysteine 157, and cysteine 141-cysteine 155. Residues 164-177 (QAIEGALRIAKKLI) form a predicted alpha-helix region. Tryptophan 181 is subject to Tryptophan amide.

This sequence belongs to the neurotoxin 19 (CSTX) family. Double-CSTX subfamily. Cleavage of the propeptide depends on the processing quadruplet motif (XXXR, with at least one of X being E). As to expression, expressed by the venom gland.

It is found in the secreted. The protein localises to the target cell membrane. Its function is as follows. Spider venom toxin that exhibits cytolytic activity by forming an alpha-helix across the membrane. Lethal to insect larvae. Causes instant paralysis and death in the larvae of the flesh fly (S.carnaria) at doses of 20 ug/g, at doses of less than 10 ug/g causes reversible paralysis. Has cytolytic activity against insect Sf9 cells. Causes stable and irreversible depolarization of fly muscle fibers, leading to contracture at higher toxin concentrations. Destabilizes membranes. This Cheiracanthium punctorium (Yellow sac spider) protein is DELTA-miturgitoxin-Cp1b.